Here is a 120-residue protein sequence, read N- to C-terminus: Chaperonin GroEL (120 aa).

ATP is bound at residue 23 to 27 (DGTTT).

The protein belongs to the chaperonin (HSP60) family. In terms of assembly, forms a cylinder of 14 subunits composed of two heptameric rings stacked back-to-back. Interacts with the co-chaperonin GroES.

The protein localises to the cytoplasm. It catalyses the reaction ATP + H2O + a folded polypeptide = ADP + phosphate + an unfolded polypeptide.. Its function is as follows. Together with its co-chaperonin GroES, plays an essential role in assisting protein folding. The GroEL-GroES system forms a nano-cage that allows encapsulation of the non-native substrate proteins and provides a physical environment optimized to promote and accelerate protein folding. This is Chaperonin GroEL from Mycolicibacterium pulveris (Mycobacterium pulveris).